The following is a 371-amino-acid chain: S-adenosylmethionine:tRNA ribosyltransferase-isomerase (371 aa).

The protein belongs to the QueA family. In terms of assembly, monomer.

The protein localises to the cytoplasm. It catalyses the reaction 7-aminomethyl-7-carbaguanosine(34) in tRNA + S-adenosyl-L-methionine = epoxyqueuosine(34) in tRNA + adenine + L-methionine + 2 H(+). It functions in the pathway tRNA modification; tRNA-queuosine biosynthesis. Transfers and isomerizes the ribose moiety from AdoMet to the 7-aminomethyl group of 7-deazaguanine (preQ1-tRNA) to give epoxyqueuosine (oQ-tRNA). The chain is S-adenosylmethionine:tRNA ribosyltransferase-isomerase from Nitratidesulfovibrio vulgaris (strain DP4) (Desulfovibrio vulgaris).